The following is an 88-amino-acid chain: LKFVVLICLVIMASTSAQQCGDETCGAGTCCAVFSQNHCRRLSRMYDLCSDHADASPSGNYLFFCPCEPGLHCDRNTWTCTEGSSRSE.

The signal sequence occupies residues 1 to 17 (LKFVVLICLVIMASTSA). A Pyrrolidone carboxylic acid modification is found at Gln18. 5 disulfide bridges follow: Cys20-Cys31, Cys25-Cys39, Cys30-Cys65, Cys49-Cys73, and Cys67-Cys80. Residues 86–88 (RSE) constitute a propeptide that is removed on maturation.

The protein belongs to the MIT-like AcTx family. As to expression, expressed by the venom gland.

It is found in the secreted. This is U1-hexatoxin-Iw1d from Illawarra wisharti (Illawarra funnel-web spider).